Consider the following 117-residue polypeptide: DNA-directed RNA polymerase subunit omega (117 aa).

The protein belongs to the RNA polymerase subunit omega family. As to quaternary structure, the RNAP catalytic core consists of 2 alpha, 1 beta, 1 beta' and 1 omega subunit. When a sigma factor is associated with the core the holoenzyme is formed, which can initiate transcription.

It carries out the reaction RNA(n) + a ribonucleoside 5'-triphosphate = RNA(n+1) + diphosphate. Its function is as follows. Promotes RNA polymerase assembly. Latches the N- and C-terminal regions of the beta' subunit thereby facilitating its interaction with the beta and alpha subunits. The sequence is that of DNA-directed RNA polymerase subunit omega from Jannaschia sp. (strain CCS1).